The primary structure comprises 457 residues: uncharacterized protein (457 aa).

Lysine 75 carries the post-translational modification N6-(pyridoxal phosphate)lysine.

Requires pyridoxal 5'-phosphate as cofactor.

This is an uncharacterized protein from Sinorhizobium fredii (strain NBRC 101917 / NGR234).